The following is a 286-amino-acid chain: Protein NipSnap homolog 2 (286 aa).

The transit peptide at Met1–Pro23 directs the protein to the mitochondrion.

Belongs to the NipSnap family. Interacts with CALCOCO2/NDP52, NBR1, SQSTM1/p62, TAX1BP1 and WDFY3/ALFY. Interacts with ATG8 family proteins (MAP1LC3A, MAP1LC3B, MAP1LC3C, GABARAP, GABARAPL1 and GABARAPL2). Interacts with VDAC1. As to expression, widely expressed. Most abundant in heart and skeletal muscle.

Its subcellular location is the mitochondrion matrix. Protein involved in mitophagy by facilitating recruitment of the autophagy machinery required for clearance of damaged mitochondria. Accumulates on the mitochondria surface in response to mitochondrial depolarization and acts as a 'eat me' signal by recruiting proteins involved in selective autophagy, such as autophagy receptors (CALCOCO2/NDP52, NBR1, SQSTM1/p62, TAX1BP1 and WDFY3/ALFY) and ATG8 family proteins (MAP1LC3A, MAP1LC3B, MAP1LC3C, GABARAP, GABARAPL1 and GABARAPL2). In Homo sapiens (Human), this protein is Protein NipSnap homolog 2.